Reading from the N-terminus, the 286-residue chain is Probable ketoamine kinase YniA (286 aa).

Residue 91 to 93 coordinates ATP; sequence DYL. Catalysis depends on Asp-193, which acts as the Proton acceptor.

It belongs to the fructosamine kinase family.

In terms of biological role, ketoamine kinase that phosphorylates ketoamines on the third carbon of the sugar moiety to generate ketoamine 3-phosphate. Its precise substrate are unknown: does not have ribulosamine and/or erythrulosamine 3-kinase activity in vitro. The polypeptide is Probable ketoamine kinase YniA (yniA) (Escherichia coli (strain K12)).